Consider the following 942-residue polypeptide: Chitin synthase 2 (942 aa).

The segment covering 1–13 (MAYHYSHDSDRRQ) has biased composition (basic and acidic residues). Residues 1-132 (MAYHYSHDSD…PSHTDYSDED (132 aa)) form a disordered region. The span at 18-33 (YNYPSNYSNPSQYSIP) shows a compositional bias: low complexity. N23 carries N-linked (GlcNAc...) asparagine glycosylation. Polar residues predominate over residues 71–80 (PQPTASSMTS). Residue N587 is glycosylated (N-linked (GlcNAc...) asparagine). The next 4 membrane-spanning stretches (helical) occupy residues 590-610 (IFAA…GHGI), 625-645 (FNLL…FFLI), 663-683 (IFQV…VCSL), and 696-716 (FCIF…GWTV). The N-linked (GlcNAc...) asparagine glycan is linked to N736. 2 helical membrane passes run 739–759 (FVQL…SSLL) and 770–790 (FVQY…YAMC). N803 is a glycosylation site (N-linked (GlcNAc...) asparagine). The next 2 membrane-spanning stretches (helical) occupy residues 873 to 893 (VVLL…SSTF) and 916 to 936 (IFYA…LYLI).

Belongs to the chitin synthase family. Class III subfamily.

The protein resides in the cell membrane. The catalysed reaction is [(1-&gt;4)-N-acetyl-beta-D-glucosaminyl](n) + UDP-N-acetyl-alpha-D-glucosamine = [(1-&gt;4)-N-acetyl-beta-D-glucosaminyl](n+1) + UDP + H(+). Its function is as follows. Polymerizes chitin, a structural polymer of the cell wall and septum, by transferring the sugar moiety of UDP-GlcNAc to the non-reducing end of the growing chitin polymer. In Cryptococcus neoformans var. grubii serotype A (strain H99 / ATCC 208821 / CBS 10515 / FGSC 9487) (Filobasidiella neoformans var. grubii), this protein is Chitin synthase 2.